We begin with the raw amino-acid sequence, 100 residues long: uncharacterized protein (100 aa).

This is an uncharacterized protein from Archaeoglobus fulgidus (strain ATCC 49558 / DSM 4304 / JCM 9628 / NBRC 100126 / VC-16).